The following is a 711-amino-acid chain: DNA ligase (711 aa).

NAD(+)-binding positions include 39–43 (DAEYD), 88–89 (SL), and Glu-119. Lys-121 serves as the catalytic N6-AMP-lysine intermediate. NAD(+) contacts are provided by Arg-142, Glu-179, Lys-295, and Lys-319. Zn(2+) is bound by residues Cys-416, Cys-419, Cys-434, and Cys-440. A BRCT domain is found at 630 to 711 (ESVSSLAGRA…LRELLAGAGA (82 aa)).

The protein belongs to the NAD-dependent DNA ligase family. LigA subfamily. Mg(2+) serves as cofactor. Mn(2+) is required as a cofactor.

The catalysed reaction is NAD(+) + (deoxyribonucleotide)n-3'-hydroxyl + 5'-phospho-(deoxyribonucleotide)m = (deoxyribonucleotide)n+m + AMP + beta-nicotinamide D-nucleotide.. Functionally, DNA ligase that catalyzes the formation of phosphodiester linkages between 5'-phosphoryl and 3'-hydroxyl groups in double-stranded DNA using NAD as a coenzyme and as the energy source for the reaction. It is essential for DNA replication and repair of damaged DNA. The polypeptide is DNA ligase (Halorhodospira halophila (strain DSM 244 / SL1) (Ectothiorhodospira halophila (strain DSM 244 / SL1))).